Consider the following 614-residue polypeptide: Probable ATP-dependent RNA helicase DDX5 (614 aa).

Basic and acidic residues predominate over residues M1–G15. Residues M1 to E39 are disordered. Phosphoserine is present on S24. Position 32 is an N6-acetyllysine; alternate (K32). A Glycyl lysine isopeptide (Lys-Gly) (interchain with G-Cter in SUMO2); alternate cross-link involves residue K32. 2 positions are modified to N6-acetyllysine: K33 and K40. K45 is covalently cross-linked (Glycyl lysine isopeptide (Lys-Gly) (interchain with G-Cter in SUMO2)). K53 is covalently cross-linked (Glycyl lysine isopeptide (Lys-Gly) (interchain with G-Cter in SUMO2); alternate). K53 is covalently cross-linked (Glycyl lysine isopeptide (Lys-Gly) (interchain with G-Cter in SUMO); alternate). K53 is covalently cross-linked (Glycyl lysine isopeptide (Lys-Gly) (interchain with G-Cter in SUMO1); alternate). The Q motif signature appears at L94 to A122. ATP is bound by residues F114–E116, Q121, and A138–T145. The Helicase ATP-binding domain occupies W125 to I300. K236 bears the N6-acetyllysine mark. Residues D248–D251 carry the DEAD box motif. Y297 is modified (phosphotyrosine). One can recognise a Helicase C-terminal domain in the interval K328–V475. Residues K340, K343, K388, K391, K411, K437, K451, and K470 each participate in a glycyl lysine isopeptide (Lys-Gly) (interchain with G-Cter in SUMO2) cross-link. A disordered region spans residues D477–G504. The transactivation domain stretch occupies residues D477–Q614. Position 480 is a phosphoserine (S480). Positions G488–S498 are enriched in basic and acidic residues. A Glycyl lysine isopeptide (Lys-Gly) (interchain with G-Cter in SUMO2) cross-link involves residue K523.

The protein belongs to the DEAD box helicase family. DDX5/DBP2 subfamily. In terms of assembly, identified in the spliceosome C complex. Component of a ribonucleoprotein complex containing mRNAs and RNA-binding proteins including DDX5, HNRNPH2 and SRSF1 as well as splicing regulator ARVCF. Interacts with RBM4; the interaction occurs in an RNA-independent manner. Interacts with AGO1 and AGO2. Interacts with ESR1, AR, EP300, CREBBP, POLR2A, TP53, RUNX2 and HDAC1. Self-associates. Interacts with DDX17. Interacts with BRDT. The large PER complex involved in the repression of transcriptional termination is composed of at least PER2, CDK9, DDX5, DHX9, NCBP1 and POLR2A (active). Interacts with DHX36; this interaction occurs in a RNA-dependent manner. Interacts with NUPR1. Interacts with ERCC6. Interacts with DDX3X in the cytoplasm; this interaction may be more efficient when both proteins are unphosphorylated. In terms of processing, sumoylated; sumoylation, promoted by PIAS1, promotes interaction with HDAC1 and transcriptional repression activity. Sumoylation also significantly increases stability, and reduces polyubiquitination. Polyubiquitinated, leading to proteasomal degradation. Post-translationally, weakly phosphorylated in the G1/S phase of the cell cycle and much more at G2/M, especially at Thr and Tyr residues.

It localises to the nucleus. It is found in the nucleolus. The protein resides in the cytoplasm. It catalyses the reaction ATP + H2O = ADP + phosphate + H(+). In terms of biological role, involved in the alternative regulation of pre-mRNA splicing; its RNA helicase activity is necessary for increasing tau exon 10 inclusion and occurs in a RBM4-dependent manner. Binds to the tau pre-mRNA in the stem-loop region downstream of exon 10. The rate of ATP hydrolysis is highly stimulated by single-stranded RNA. Involved in transcriptional regulation; the function is independent of the RNA helicase activity. Transcriptional coactivator for androgen receptor AR but probably not ESR1. Synergizes with DDX17 and SRA1 RNA to activate MYOD1 transcriptional activity and involved in skeletal muscle differentiation. Transcriptional coactivator for p53/TP53 and involved in p53/TP53 transcriptional response to DNA damage and p53/TP53-dependent apoptosis. Transcriptional coactivator for RUNX2 and involved in regulation of osteoblast differentiation. Acts as a transcriptional repressor in a promoter-specific manner; the function probably involves association with histone deacetylases, such as HDAC1. As component of a large PER complex is involved in the inhibition of 3' transcriptional termination of circadian target genes such as PER1 and NR1D1 and the control of the circadian rhythms. The protein is Probable ATP-dependent RNA helicase DDX5 (Ddx5) of Mus musculus (Mouse).